We begin with the raw amino-acid sequence, 330 residues long: Phosphate acyltransferase (330 aa).

It belongs to the PlsX family. In terms of assembly, homodimer. Probably interacts with PlsY.

Its subcellular location is the cytoplasm. The enzyme catalyses a fatty acyl-[ACP] + phosphate = an acyl phosphate + holo-[ACP]. It participates in lipid metabolism; phospholipid metabolism. Its function is as follows. Catalyzes the reversible formation of acyl-phosphate (acyl-PO(4)) from acyl-[acyl-carrier-protein] (acyl-ACP). This enzyme utilizes acyl-ACP as fatty acyl donor, but not acyl-CoA. The protein is Phosphate acyltransferase of Bacillus cereus (strain G9842).